We begin with the raw amino-acid sequence, 726 residues long: Dipeptidyl-peptidase 5 (726 aa).

An N-terminal signal peptide occupies residues 1–19; it reads MAAAKWLIASLAFASSGLA. N96 and N252 each carry an N-linked (GlcNAc...) asparagine glycan. The disordered stretch occupies residues 269–291; that stretch reads AEPINKRNGPRTPQGIEGASSSP. Residue S558 is the Charge relay system of the active site. N-linked (GlcNAc...) asparagine glycosylation is found at N605 and N638. Catalysis depends on charge relay system residues D641 and H673. A glycan (N-linked (GlcNAc...) asparagine) is linked at N699.

Belongs to the peptidase S9C family.

It localises to the secreted. This is Dipeptidyl-peptidase 5 (DPPV) from Trichophyton schoenleinii.